Consider the following 285-residue polypeptide: 2-dehydro-3-deoxyphosphooctonate aldolase (285 aa).

Belongs to the KdsA family.

The protein localises to the cytoplasm. The catalysed reaction is D-arabinose 5-phosphate + phosphoenolpyruvate + H2O = 3-deoxy-alpha-D-manno-2-octulosonate-8-phosphate + phosphate. It functions in the pathway carbohydrate biosynthesis; 3-deoxy-D-manno-octulosonate biosynthesis; 3-deoxy-D-manno-octulosonate from D-ribulose 5-phosphate: step 2/3. It participates in bacterial outer membrane biogenesis; lipopolysaccharide biosynthesis. The protein is 2-dehydro-3-deoxyphosphooctonate aldolase of Leptothrix cholodnii (strain ATCC 51168 / LMG 8142 / SP-6) (Leptothrix discophora (strain SP-6)).